Reading from the N-terminus, the 700-residue chain is Elongation factor G (700 aa).

The 277-residue stretch at 10–286 (NKVRNIGIMA…AVIDYLPNPL (277 aa)) folds into the tr-type G domain. GTP-binding positions include 19-26 (AHIDAGKT), 83-87 (DTPGH), and 137-140 (NKMD).

The protein belongs to the TRAFAC class translation factor GTPase superfamily. Classic translation factor GTPase family. EF-G/EF-2 subfamily.

Its subcellular location is the cytoplasm. In terms of biological role, catalyzes the GTP-dependent ribosomal translocation step during translation elongation. During this step, the ribosome changes from the pre-translocational (PRE) to the post-translocational (POST) state as the newly formed A-site-bound peptidyl-tRNA and P-site-bound deacylated tRNA move to the P and E sites, respectively. Catalyzes the coordinated movement of the two tRNA molecules, the mRNA and conformational changes in the ribosome. This chain is Elongation factor G, found in Rhodococcus erythropolis (strain PR4 / NBRC 100887).